Consider the following 56-residue polypeptide: Large ribosomal subunit protein bL32 (56 aa).

Positions 1 to 35 are disordered; sequence MAVQQNKPTRSKRGMRRSHDALTATHVSVDKTSGE.

The protein belongs to the bacterial ribosomal protein bL32 family.

The polypeptide is Large ribosomal subunit protein bL32 (Proteus mirabilis (strain HI4320)).